Consider the following 154-residue polypeptide: Small ribosomal subunit protein uS9 (154 aa).

Disordered stretches follow at residues 1-33 (MVPPQRAKNDTSSAPDSAAETRGPLVSSGSGLG) and 115-154 (PENNRKPLKSAGFLTRDSRVKERKKAGLKKARKAPQYSKR). Residues 135–154 (KERKKAGLKKARKAPQYSKR) are compositionally biased toward basic residues.

It belongs to the universal ribosomal protein uS9 family.

In Tropheryma whipplei (strain TW08/27) (Whipple's bacillus), this protein is Small ribosomal subunit protein uS9.